The primary structure comprises 88 residues: uncharacterized protein (88 aa).

This is an uncharacterized protein from Homo sapiens (Human).